The primary structure comprises 197 residues: Probable GTP-binding protein EngB (197 aa).

The EngB-type G domain maps to 24-197 (DIPEIALAGR…WDAILEKVNK (174 aa)). GTP contacts are provided by residues 32–39 (GRSNVGKS), 59–63 (GKTQL), 77–80 (DVPG), 144–147 (TKAD), and 176–178 (FSS). Mg(2+) is bound by residues Ser39 and Thr61.

It belongs to the TRAFAC class TrmE-Era-EngA-EngB-Septin-like GTPase superfamily. EngB GTPase family. The cofactor is Mg(2+).

Necessary for normal cell division and for the maintenance of normal septation. This Streptococcus gordonii (strain Challis / ATCC 35105 / BCRC 15272 / CH1 / DL1 / V288) protein is Probable GTP-binding protein EngB.